Here is a 34-residue protein sequence, read N- to C-terminus: Conotoxin S4.3 (34 aa).

Q1 carries the pyrrolidone carboxylic acid modification. 4-carboxyglutamate is present on E3. An O-linked (HexNAc...) serine glycan is attached at S7. An O-linked (HexNAc...) threonine glycan is attached at T9. 4-hydroxyproline is present on residues P17, P22, P31, and P32.

This sequence belongs to the conotoxin A superfamily. Post-translationally, contains 3 disulfide bonds. In terms of tissue distribution, expressed by the venom duct.

Its subcellular location is the secreted. Its function is as follows. Probable neurotoxin with ion channel inhibitor activity. This chain is Conotoxin S4.3, found in Conus striatus (Striated cone).